We begin with the raw amino-acid sequence, 149 residues long: Transcriptional repressor NrdR (149 aa).

Residues 3 to 34 (CPFCSATDTKVIDSRLVADGHQVRRRRECTEC) fold into a zinc finger. The 91-residue stretch at 49-139 (PRVIKRDGTR…VYRAFEDVSQ (91 aa)) folds into the ATP-cone domain.

It belongs to the NrdR family. The cofactor is Zn(2+).

Functionally, negatively regulates transcription of bacterial ribonucleotide reductase nrd genes and operons by binding to NrdR-boxes. The sequence is that of Transcriptional repressor NrdR from Shewanella frigidimarina (strain NCIMB 400).